Here is a 220-residue protein sequence, read N- to C-terminus: MAEYLASIFGTEKDKVNCSFYFKIGACRHGDRCSRLHNKPTFSQTIVLLNLYRNPQNTAQTADGSHCHVSDVEVQEHYDNFFEEVFTELQEKYGEIEEMNVCDNLGDHLVGNVYVKFRREEDAERAVVELNNRWFNGQAVHAELSPVTDFRESCCRQYEMGECTRGGFCNFMHLRPISRDLRRQLYGRGPRRRSPPRSHTGHRPRERNRRRSPDHRHGRF.

An N-acetylalanine modification is found at Ala-2. The segment at 12–40 (EKDKVNCSFYFKIGACRHGDRCSRLHNKP) adopts a C3H1-type 1 zinc-finger fold. One can recognise an RRM domain in the interval 65-147 (SHCHVSDVEV…QAVHAELSPV (83 aa)). The C3H1-type 2 zinc finger occupies 149–176 (DFRESCCRQYEMGECTRGGFCNFMHLRP). The interval 186 to 220 (YGRGPRRRSPPRSHTGHRPRERNRRRSPDHRHGRF) is disordered. Residues 189–220 (GPRRRSPPRSHTGHRPRERNRRRSPDHRHGRF) show a composition bias toward basic residues.

It belongs to the splicing factor SR family. As to quaternary structure, interacts with GFI1, U2AF2 and C1QBP.

The protein localises to the nucleus. The protein resides in the nucleus speckle. It is found in the cytoplasm. Its function is as follows. RNA-binding protein that function as a pre-mRNA splicing factor. Plays a critical role in both constitutive and enhancer-dependent splicing by mediating protein-protein interactions and protein-RNA interactions required for accurate 3'-splice site selection. Acts by enhancing the binding of U2AF2 to weak pyrimidine tracts. Also participates in the regulation of alternative pre-mRNA splicing. Activates exon 5 skipping of PTPRC during T-cell activation; an event reversed by GFI1. Binds to RNA at the AG dinucleotide at the 3'-splice site. Shows a preference for AGC or AGA. The protein is Splicing factor U2AF 26 kDa subunit (U2AF1L4) of Bos taurus (Bovine).